The primary structure comprises 133 residues: Small ribosomal subunit protein uS9 (133 aa).

The segment at 94–133 is disordered; that stretch reads SADNRKPLKTEGHLSRDPRAKERRKYGLKKARKAPQFSKR. The span at 95–113 shows a compositional bias: basic and acidic residues; that stretch reads ADNRKPLKTEGHLSRDPRA. Residues 114-133 show a composition bias toward basic residues; it reads KERRKYGLKKARKAPQFSKR.

This sequence belongs to the universal ribosomal protein uS9 family.

The protein is Small ribosomal subunit protein uS9 of Synechococcus sp. (strain CC9605).